Consider the following 621-residue polypeptide: Glutamine--fructose-6-phosphate aminotransferase [isomerizing] (621 aa).

Cys2 (nucleophile; for GATase activity) is an active-site residue. One can recognise a Glutamine amidotransferase type-2 domain in the interval 2–223; it reads CGIIGYVGEG…DRELGIISIS (222 aa). SIS domains follow at residues 289-436 and 470-611; these read LHLE…HKFT and LSKQ…IDKP. Lys616 serves as the catalytic For Fru-6P isomerization activity.

As to quaternary structure, homodimer.

It is found in the plastid. The protein localises to the chloroplast. The catalysed reaction is D-fructose 6-phosphate + L-glutamine = D-glucosamine 6-phosphate + L-glutamate. In terms of biological role, catalyzes the first step in hexosamine metabolism, converting fructose-6P into glucosamine-6P using glutamine as a nitrogen source. This is Glutamine--fructose-6-phosphate aminotransferase [isomerizing] from Cyanidium caldarium (Red alga).